A 214-amino-acid polypeptide reads, in one-letter code: ATP phosphoribosyltransferase (214 aa).

This sequence belongs to the ATP phosphoribosyltransferase family. Short subfamily. As to quaternary structure, heteromultimer composed of HisG and HisZ subunits.

The protein resides in the cytoplasm. It catalyses the reaction 1-(5-phospho-beta-D-ribosyl)-ATP + diphosphate = 5-phospho-alpha-D-ribose 1-diphosphate + ATP. Its pathway is amino-acid biosynthesis; L-histidine biosynthesis; L-histidine from 5-phospho-alpha-D-ribose 1-diphosphate: step 1/9. Functionally, catalyzes the condensation of ATP and 5-phosphoribose 1-diphosphate to form N'-(5'-phosphoribosyl)-ATP (PR-ATP). Has a crucial role in the pathway because the rate of histidine biosynthesis seems to be controlled primarily by regulation of HisG enzymatic activity. The chain is ATP phosphoribosyltransferase from Halorhodospira halophila (strain DSM 244 / SL1) (Ectothiorhodospira halophila (strain DSM 244 / SL1)).